A 398-amino-acid chain; its full sequence is Cysteine desulfurase 2 (398 aa).

Pyridoxal 5'-phosphate is bound by residues 71–72 (GT), asparagine 150, glutamine 178, and 198–200 (SGH). Lysine 201 is modified (N6-(pyridoxal phosphate)lysine). Threonine 236 is a binding site for pyridoxal 5'-phosphate. Cysteine 323 (cysteine persulfide intermediate) is an active-site residue. Residue cysteine 323 participates in [2Fe-2S] cluster binding.

It belongs to the class-V pyridoxal-phosphate-dependent aminotransferase family. NifS/IscS subfamily. In terms of assembly, homodimer. The cofactor is pyridoxal 5'-phosphate.

It carries out the reaction (sulfur carrier)-H + L-cysteine = (sulfur carrier)-SH + L-alanine. Catalyzes the removal of elemental sulfur atoms from cysteine to produce alanine. Seems to participate in the biosynthesis of the nitrogenase metalloclusters by providing the inorganic sulfur required for the Fe-S core formation. This Trichormus variabilis (strain ATCC 29413 / PCC 7937) (Anabaena variabilis) protein is Cysteine desulfurase 2.